Here is a 709-residue protein sequence, read N- to C-terminus: Bud site selection protein 14 (709 aa).

The residue at position 2 (Ser2) is an N-acetylserine. Residues 61–258 (DIINNRPTSG…DYQPLSPPRE (198 aa)) form a disordered region. Composition is skewed to polar residues over residues 62–74 (IINN…SKLT) and 89–107 (VTPT…NILS). Composition is skewed to basic and acidic residues over residues 111 to 123 (EKGH…RDDD) and 131 to 150 (VEKH…KENS). The residue at position 159 (Tyr159) is a Phosphotyrosine. Residues Ser160 and Ser162 each carry the phosphoserine modification. A Phosphothreonine modification is found at Thr177. Phosphoserine occurs at positions 212 and 222. The span at 212-226 (SEDEDEEENYSDDDD) shows a compositional bias: acidic residues. The SH3 domain occupies 259-320 (LDPDKLYALY…PAEILETFPE (62 aa)). Positions 334–367 (SSQSVASSDSKDDSISSGNKNQSDAESIIPTPAL) are disordered. Residues Ser376, Ser378, and Ser401 each carry the phosphoserine modification. Acidic residues predominate over residues 396 to 406 (DTSLDSNDDGG). Disordered stretches follow at residues 396–421 (DTSL…DNDK), 464–510 (NVKK…SDYD), 525–571 (ANGM…SSRA), and 600–680 (ASLG…PASK). Residues 470 to 504 (RQDNKNESEPKTSSSKDREDDYNANRYVGQEKSEP) are compositionally biased toward basic and acidic residues. Ser507 bears the Phosphoserine mark. Residues 531–552 (SDSQNSLSTIGEFSPSSSEWTN) show a composition bias toward polar residues. The segment covering 553 to 569 (ESPSTPIVEESSSIPSS) has biased composition (low complexity). The span at 600 to 614 (ASLGSSGGMANQTDA) shows a compositional bias: polar residues. Over residues 615 to 633 (EQPKEELEKHHSTPEEEKQ) the composition is skewed to basic and acidic residues. Phosphoserine is present on residues Ser655, Ser658, and Ser670. A compositionally biased stretch (low complexity) spans 655 to 671 (SSASINSSLSGSRALSN).

In terms of assembly, interacts with GLC7.

Functionally, important for bud site selection. Seems to be a regulatory subunit of the BUD14-GLC7 type-I phosphatase complex. The BUD14-GLC7 complex is necessary to regulate microtubule dynamics at the cortex and may function as a specific activator of the dynein complex. The chain is Bud site selection protein 14 (BUD14) from Saccharomyces cerevisiae (strain ATCC 204508 / S288c) (Baker's yeast).